A 406-amino-acid chain; its full sequence is Ribulose bisphosphate carboxylase large chain (406 aa).

2 residues coordinate substrate: Asn-101 and Thr-151. Lys-153 (proton acceptor) is an active-site residue. Lys-155 is a substrate binding site. Residues Lys-179, Asp-181, and Glu-182 each coordinate Mg(2+). An N6-carboxylysine modification is found at Lys-179. His-272 functions as the Proton acceptor in the catalytic mechanism. Substrate contacts are provided by Arg-273, His-305, and Ser-357.

This sequence belongs to the RuBisCO large chain family. Type I subfamily. As to quaternary structure, heterohexadecamer of 8 large chains and 8 small chains; disulfide-linked. The disulfide link is formed within the large subunit homodimers. It depends on Mg(2+) as a cofactor. In terms of processing, the disulfide bond which can form in the large chain dimeric partners within the hexadecamer appears to be associated with oxidative stress and protein turnover.

The protein resides in the plastid. The protein localises to the chloroplast. It catalyses the reaction 2 (2R)-3-phosphoglycerate + 2 H(+) = D-ribulose 1,5-bisphosphate + CO2 + H2O. The catalysed reaction is D-ribulose 1,5-bisphosphate + O2 = 2-phosphoglycolate + (2R)-3-phosphoglycerate + 2 H(+). In terms of biological role, ruBisCO catalyzes two reactions: the carboxylation of D-ribulose 1,5-bisphosphate, the primary event in carbon dioxide fixation, as well as the oxidative fragmentation of the pentose substrate in the photorespiration process. Both reactions occur simultaneously and in competition at the same active site. The chain is Ribulose bisphosphate carboxylase large chain (rbcL) from Trichomanes striatum (Fern).